A 138-amino-acid polypeptide reads, in one-letter code: Small ribosomal subunit protein uS9c (138 aa).

It belongs to the universal ribosomal protein uS9 family.

Its subcellular location is the plastid. The protein localises to the chloroplast. This Trieres chinensis (Marine centric diatom) protein is Small ribosomal subunit protein uS9c (rps9).